The chain runs to 1199 residues: DNA-directed RNA polymerase subunit beta (1199 aa).

The disordered stretch occupies residues 1177–1199 (EQEEKKAKEAEQETAEKEETKTE).

It belongs to the RNA polymerase beta chain family. As to quaternary structure, the RNAP catalytic core consists of 2 alpha, 1 beta, 1 beta' and 1 omega subunit. When a sigma factor is associated with the core the holoenzyme is formed, which can initiate transcription.

It catalyses the reaction RNA(n) + a ribonucleoside 5'-triphosphate = RNA(n+1) + diphosphate. DNA-dependent RNA polymerase catalyzes the transcription of DNA into RNA using the four ribonucleoside triphosphates as substrates. The polypeptide is DNA-directed RNA polymerase subunit beta (Ligilactobacillus salivarius (strain UCC118) (Lactobacillus salivarius)).